The primary structure comprises 203 residues: MDLFSWQLGLPATLLCLAFGYLLGSIPFGLILTRMAGLGDVRKIGSGNIGATNVLRTGNKKLAAATLLLDALKGTAAAAIASLWGVEAGIAAGLAAFLGHLFPVWLSFKGGKGVATYIGVLLGLAPLMVPAFAAIWLAAAKITRYSSLSALIATAVMPIALYATGYGKVALLFALMTVITWIKHRANIQRLLSGTESRIGEKG.

The next 5 helical transmembrane spans lie at 12–32 (ATLL…GLIL), 66–86 (TLLL…LWGV), 88–108 (AGIA…WLSF), 118–138 (IGVL…IWLA), and 159–179 (IALY…MTVI).

It belongs to the PlsY family. Probably interacts with PlsX.

The protein resides in the cell inner membrane. It catalyses the reaction an acyl phosphate + sn-glycerol 3-phosphate = a 1-acyl-sn-glycero-3-phosphate + phosphate. It participates in lipid metabolism; phospholipid metabolism. In terms of biological role, catalyzes the transfer of an acyl group from acyl-phosphate (acyl-PO(4)) to glycerol-3-phosphate (G3P) to form lysophosphatidic acid (LPA). This enzyme utilizes acyl-phosphate as fatty acyl donor, but not acyl-CoA or acyl-ACP. This Sinorhizobium fredii (strain NBRC 101917 / NGR234) protein is Glycerol-3-phosphate acyltransferase.